The primary structure comprises 30 residues: Neurotoxin II.22.5 (30 aa).

Residues 1–30 (KEGYIVNYHTGCKYTCAKLGDNDYCLRECK) enclose the LCN-type CS-alpha/beta domain.

The protein belongs to the long (4 C-C) scorpion toxin superfamily. Sodium channel inhibitor family. Beta subfamily. Expressed by the venom gland.

The protein localises to the secreted. Binds to sodium channels (Nav) and inhibits the inactivation of the activated channels, thereby blocking neuronal transmission. The chain is Neurotoxin II.22.5 from Centruroides tecomanus (Scorpion).